Here is a 1049-residue protein sequence, read N- to C-terminus: Retinoblastoma-like protein 1 (1049 aa).

Phosphothreonine is present on residues threonine 332, threonine 369, and threonine 385. The segment at 385 to 584 (TPVASATQSV…WEALRASANK (200 aa)) is domain A. A pocket; binds T and E1A region spans residues 385 to 944 (TPVASATQSV…GRVKSFALKY (560 aa)). The tract at residues 585–779 (VPSCEEVIFP…TQDAPLTGIS (195 aa)) is spacer. Residues serine 640, serine 650, serine 748, and serine 761 each carry the phosphoserine modification. The tract at residues 780–944 (KPKRTGSLAL…GRVKSFALKY (165 aa)) is domain B. Phosphoserine is present on residues serine 959, serine 970, and serine 983. Threonine 992 bears the Phosphothreonine mark. A phosphoserine mark is found at serine 1004 and serine 1022.

This sequence belongs to the retinoblastoma protein (RB) family. As to quaternary structure, component of the DREAM complex (also named LINC complex) at least composed of E2F4, E2F5, LIN9, LIN37, LIN52, LIN54, MYBL1, MYBL2, RBL1, RBL2, RBBP4, TFDP1 and TFDP2. The complex exists in quiescent cells where it represses cell cycle-dependent genes. It dissociates in S phase when LIN9, LIN37, LIN52 and LIN54 form a subcomplex that binds to MYBL2. Interacts with AATF. Interacts with KDM5A. Interacts with KMT5B and KMT5C. Interacts with USP4. Interacts with RBBP9. In terms of processing, cell-cycle arrest properties are inactivated by phosphorylation on Thr-332, Ser-640, Ser-959 and Ser-970 by CDK4.

It is found in the nucleus. In terms of biological role, key regulator of entry into cell division. Directly involved in heterochromatin formation by maintaining overall chromatin structure and, in particular, that of constitutive heterochromatin by stabilizing histone methylation. Recruits and targets histone methyltransferases KMT5B and KMT5C, leading to epigenetic transcriptional repression. Controls histone H4 'Lys-20' trimethylation. Probably acts as a transcription repressor by recruiting chromatin-modifying enzymes to promoters. Potent inhibitor of E2F-mediated trans-activation. May act as a tumor suppressor. The sequence is that of Retinoblastoma-like protein 1 from Rattus norvegicus (Rat).